Here is a 371-residue protein sequence, read N- to C-terminus: NDMA-dependent alcohol dehydrogenase (371 aa).

Zn(2+) is bound by residues Cys-40, His-61, Cys-91, Cys-94, Cys-97, Cys-105, and Cys-167.

Belongs to the zinc-containing alcohol dehydrogenase family. Homotrimer. Requires NADH as cofactor.

It catalyses the reaction N,N-dimethyl-4-nitrosoaniline + a primary alcohol = 4-(hydroxylamino)-N,N-dimethylaniline + an aldehyde. The catalysed reaction is ethanol + A = acetaldehyde + AH2. Inhibited by trans-4-(N,N-dimethylamino)-cinnamaldehyde through direct binding to the catalytic zinc ion in a substrate-like geometry. Isobutyramide acts as a competitive inhibitor with respect to the electron acceptor NDMA. Acetaldehyde, AMP, ADP, ATP, as well as CuSO(4), FeSO(4), HgCl(2), NiCl(2), ZnSO(4), KCN, and NaN(3) are additional inhibitors of the catalytic activity. Functionally, catalytically different from common alcohol dehydrogenases. Effective in oxidizing ethanol, other primary alcohols and benzylalcohol only in the presence of p-nitroso-N,N-dimethylaniline (NDMA) as an electron acceptor. NADH acts as a cofactor here instead as a coenzyme. The polypeptide is NDMA-dependent alcohol dehydrogenase (Amycolatopsis methanolica).